The chain runs to 258 residues: Venom plasminogen activator GPV-PA (258 aa).

The first 18 residues, 1-18 (MVLIRVLANLLILQLSYA), serve as a signal peptide directing secretion. Positions 19–24 (QKSSEL) are excised as a propeptide. Residues 25–249 (VFGGRPCNIN…YTDWIQSIIA (225 aa)) form the Peptidase S1 domain. 6 disulfides stabilise this stretch: Cys31–Cys163, Cys50–Cys66, Cys98–Cys256, Cys142–Cys210, Cys174–Cys189, and Cys200–Cys225. Asn44 carries an N-linked (GlcNAc...) asparagine glycan. Active-site charge relay system residues include His65 and Asp110. Asn121 and Asn185 each carry an N-linked (GlcNAc...) asparagine glycan. Ser204 serves as the catalytic Charge relay system.

It belongs to the peptidase S1 family. Snake venom subfamily. In terms of assembly, monomer. Expressed by the venom gland.

It is found in the secreted. Functionally, snake venom serine protease that activates plasminogen. The chain is Venom plasminogen activator GPV-PA from Trimeresurus albolabris (White-lipped pit viper).